A 482-amino-acid polypeptide reads, in one-letter code: Coagulation factor X (482 aa).

The first 20 residues, Met-1–Pro-20, serve as a signal peptide directing secretion. Positions Gly-21–Arg-40 are excised as a propeptide. The Gla domain maps to Ala-41 to Glu-85. 4-carboxyglutamate is present on residues Glu-46, Glu-47, Glu-54, Glu-56, Glu-59, Glu-60, Glu-65, Glu-66, Glu-69, Glu-72, Glu-75, and Glu-79. A disulfide bridge connects residues Cys-57 and Cys-62. One can recognise an EGF-like 1; calcium-binding domain in the interval Asp-86–Glu-122. Cystine bridges form between Cys-90/Cys-101, Cys-95/Cys-110, Cys-112/Cys-121, Cys-129/Cys-140, Cys-136/Cys-149, Cys-151/Cys-164, Cys-172/Cys-340, Cys-238/Cys-243, Cys-259/Cys-275, Cys-388/Cys-402, and Cys-413/Cys-441. At Asp-103 the chain carries (3R)-3-hydroxyaspartate. The 41-residue stretch at Val-125 to Leu-165 folds into the EGF-like 2 domain. Positions Val-184 to Arg-231 are cleaved as a propeptide — activation peptide. N-linked (GlcNAc...) asparagine glycosylation is found at Asn-187 and Asn-218. One can recognise a Peptidase S1 domain in the interval Ile-232 to Lys-465. Active-site charge relay system residues include His-274 and Asp-320. Residue Ser-417 is the Charge relay system of the active site.

The protein belongs to the peptidase S1 family. In terms of assembly, the two chains are formed from a single-chain precursor by the excision of two Arg residues and are held together by 1 or more disulfide bonds. Forms a heterodimer with SERPINA5. Interacts with ixolaris, an anticoagulant protein from Ixodes scapularis saliva. The vitamin K-dependent, enzymatic carboxylation of some glutamate residues allows the modified protein to bind calcium. In terms of processing, N- and O-glycosylated. Post-translationally, proteolytically cleaved and activated by cathepsin CTSG. The activation peptide is cleaved by factor IXa (in the intrinsic pathway), or by factor VIIa (in the extrinsic pathway). The iron and 2-oxoglutarate dependent 3-hydroxylation of aspartate and asparagine is (R) stereospecific within EGF domains. Plasma; synthesized in the liver.

The protein resides in the secreted. The catalysed reaction is Selective cleavage of Arg-|-Thr and then Arg-|-Ile bonds in prothrombin to form thrombin.. Inhibited by SERPINA5. Factor Xa is a vitamin K-dependent glycoprotein that converts prothrombin to thrombin in the presence of factor Va, calcium and phospholipid during blood clotting. Factor Xa activates pro-inflammatory signaling pathways in a protease-activated receptor (PAR)-dependent manner. The protein is Coagulation factor X (F10) of Rattus norvegicus (Rat).